A 476-amino-acid polypeptide reads, in one-letter code: Protein transport protein Sec61 subunit alpha (476 aa).

Topologically, residues 2-33 (GIKFLEVIKPFCAVLPEIQKPERKIQFREKVL) are cytoplasmic. The helical transmembrane segment at 34 to 53 (WTAITLFIFLVCCQIPLFGI) threads the bilayer. The Lumenal portion of the chain corresponds to 54–76 (MSSDSADPFYWMRVILASNRGTL). The chain crosses the membrane as a helical span at residues 77–96 (MELGISPIVTSDLIMQLLAG). The Cytoplasmic segment spans residues 97–117 (AKIIEVGDSPKDRALFNGAQK). Residues 118–138 (LFGMIITIGQAIVYVMTGMYG) form a helical membrane-spanning segment. Over 139–144 (DPSEMG) the chain is Lumenal. Residues 145 to 165 (AGICLVIIIQLFVAGLIVLLL) form a helical membrane-spanning segment. Residues 166–172 (DELLQKG) lie on the Cytoplasmic side of the membrane. Residues 173–193 (YGLGSGISLLIATNICETIVW) traverse the membrane as a helical segment. Over 194-240 (KAFSPTTVNTGRGTEFEGAIIALFHLLATRTDKVRALREAFYRQNLP) the chain is Lumenal. The chain crosses the membrane as a helical span at residues 241 to 261 (NLMNLIATVFVFAVVIYFQGF). At 262–288 (RVDLPIKSARYRGQYNTYPIKLFYTSN) the chain is on the cytoplasmic side. Residues 289–309 (IPIILQSALVSNLYVISQMLS) form a helical membrane-spanning segment. Over 310–354 (TRFSGNFIVNLLGTWSDTSTGGPARAYPVGGLCYFLSPPESFGSV) the chain is Lumenal. The chain crosses the membrane as a helical span at residues 355 to 375 (LDDPVHAAIYIVFMLGSCAFF). Residues 376–420 (SKTWIEVSGSSAKDVAKQLKEQQMVMRGHRETSMVHELNRYIPTA) lie on the Cytoplasmic side of the membrane. Residues 421-441 (AAFGGLCIGGLSVMADFLGAI) form a helical membrane-spanning segment. The Lumenal segment spans residues 442 to 445 (GSGT). Residues 446-462 (GILLAVTIIYQYFEIFV) form a helical membrane-spanning segment. Residues 463–476 (KEQSEMGSMGGLFF) lie on the Cytoplasmic side of the membrane.

It belongs to the SecY/SEC61-alpha family. In terms of assembly, the SEC61 channel-forming translocon complex consists of channel-forming core components SEC61A1, SEC61B and SEC61G and different auxiliary components such as SEC62 and SEC63. The SEC61 channel associates with the multi-pass translocon (MPT) complex.

It localises to the endoplasmic reticulum membrane. Its function is as follows. Component of SEC61 channel-forming translocon complex that mediates transport of signal peptide-containing precursor polypeptides across the endoplasmic reticulum (ER). Forms a ribosome receptor and a gated pore in the ER membrane, both functions required for cotranslational translocation of nascent polypeptides. May cooperate with auxiliary protein SEC62, SEC63 and HSPA5/BiP to enable post-translational transport of small presecretory proteins. The SEC61 channel is also involved in ER membrane insertion of transmembrane proteins: it mediates membrane insertion of the first few transmembrane segments of proteins, while insertion of subsequent transmembrane regions of multi-pass membrane proteins is mediated by the multi-pass translocon (MPT) complex. The polypeptide is Protein transport protein Sec61 subunit alpha (sec61a) (Boreogadus saida (Polar cod)).